A 119-amino-acid chain; its full sequence is Large ribosomal subunit protein uL18 (119 aa).

This sequence belongs to the universal ribosomal protein uL18 family. Part of the 50S ribosomal subunit; part of the 5S rRNA/L5/L18/L25 subcomplex. Contacts the 5S and 23S rRNAs.

This is one of the proteins that bind and probably mediate the attachment of the 5S RNA into the large ribosomal subunit, where it forms part of the central protuberance. The sequence is that of Large ribosomal subunit protein uL18 from Dinoroseobacter shibae (strain DSM 16493 / NCIMB 14021 / DFL 12).